The chain runs to 322 residues: MTSSNQGNDPSENTLKNAENETPNACEDEKEHPLPDTNISQVETNLSGMEPSSISSQEDMDFQTVQNSQPEAEMTQNDPPDEELIEDSLPLQIPIPKKLTIPRLILCRIIYLSIPQPQPQLHEKKTLSDKMMFHLGEVEMTENDCFHTPILDKMIHPCFLRWRVPFFTTNEISRMIIHLLCSRNFSQAECHQHNASVKQKYVAILDHQNIMNLQRNIVFGRPLRVYYYHPLFERLTQRKASKLYQHKNGNHLFVRPRFYMPQLQTQNTVQKNVFKHSWRAHHKLRLVIITDNNNWKYLCPICGCGFNNFYDFKHHSCSFSGN.

2 stretches are compositionally biased toward polar residues: residues 1-23 (MTSS…NETP) and 37-78 (TNIS…TQND). The segment at 1–83 (MTSSNQGNDP…MTQNDPPDEE (83 aa)) is disordered.

This chain is CPX chromosomal region candidate gene 1 protein homolog (Cpxcr1), found in Mus musculus (Mouse).